The sequence spans 455 residues: Exodeoxyribonuclease 7 large subunit (455 aa).

This sequence belongs to the XseA family. Heterooligomer composed of large and small subunits.

Its subcellular location is the cytoplasm. It catalyses the reaction Exonucleolytic cleavage in either 5'- to 3'- or 3'- to 5'-direction to yield nucleoside 5'-phosphates.. Bidirectionally degrades single-stranded DNA into large acid-insoluble oligonucleotides, which are then degraded further into small acid-soluble oligonucleotides. The sequence is that of Exodeoxyribonuclease 7 large subunit from Escherichia coli O7:K1 (strain IAI39 / ExPEC).